The sequence spans 260 residues: Ribosome maturation factor RimP (260 aa).

The tract at residues Gln198 to Glu260 is disordered. Basic and acidic residues-rich tracts occupy residues Ala210–Lys228 and Asn238–Ile254.

This sequence belongs to the RimP family.

The protein localises to the cytoplasm. In terms of biological role, required for maturation of 30S ribosomal subunits. In Nitrobacter winogradskyi (strain ATCC 25391 / DSM 10237 / CIP 104748 / NCIMB 11846 / Nb-255), this protein is Ribosome maturation factor RimP.